Consider the following 96-residue polypeptide: Putative membrane protein insertion efficiency factor (96 aa).

Belongs to the UPF0161 family.

The protein resides in the cell inner membrane. Could be involved in insertion of integral membrane proteins into the membrane. In Borreliella afzelii (strain PKo) (Borrelia afzelii), this protein is Putative membrane protein insertion efficiency factor.